Consider the following 92-residue polypeptide: MGRSLKKGPFIADSLLKKVEKQNTDNDKSVIKTWSRSSTILPVMIGHTIAVHNGKTHIPVFITEQMIGHKLGEFAPTRTYRGHIRDKKGAKS.

The protein belongs to the universal ribosomal protein uS19 family.

Its function is as follows. Protein S19 forms a complex with S13 that binds strongly to the 16S ribosomal RNA. This is Small ribosomal subunit protein uS19 from Prochlorococcus marinus (strain MIT 9215).